A 61-amino-acid chain; its full sequence is [Val1,Thr6]-bradykinyl-Gln,Ser (61 aa).

The signal sequence occupies residues 1–22 (MSILKKSLFLVLFLGLVSFSIC). Positions 23–50 (EEEKREAEEEENEDEIEEQSEEKKRFEP) are excised as a propeptide. Positions 25-61 (EKREAEEEENEDEIEEQSEEKKRFEPVPPGFTPFRQS) are disordered. The segment covering 30-42 (EEEENEDEIEEQS) has biased composition (acidic residues). A 4-hydroxyproline; in form [Val1,Hyp2,Thr6]-Bradykinyl-Gln,Ser and [Val1,Hyp2,Thr6]-Bradykinin modification is found at P52.

This sequence belongs to the frog skin active peptide (FSAP) family. Bradykinin-related peptide subfamily. In terms of tissue distribution, expressed by the skin glands.

It is found in the secreted. Induces contraction of rat ileum smooth muscle (EC(50)=2.73 uM) but has no activity towards smooth muscle from tail artery, urinary bladder or uterus up to concentrations of 100 uM. Binds to both bradykinin receptor B1 (BDKRB1) and B2 (BDKRB2); the effect via BDKRB1 is stronger. Functionally, [Val1,Hyp2,Thr6]-bradykinin-Gln,Ser: Induces contraction of rat ileum smooth muscle (EC(50)=710 nM) but has no activity towards smooth muscle from tail artery, urinary bladder or uterus up to concentrations of 100 uM. Binds to both bradykinin receptor B1 (BDKRB1) and B2 (BDKRB2); the effect via BDKRB1 is stronger. Induces contraction of guinea pig ileum smooth muscle. The polypeptide is [Val1,Thr6]-bradykinyl-Gln,Ser (Pithecopus hypochondrialis (Orange-legged leaf frog)).